The chain runs to 92 residues: Small ribosomal subunit protein uS19c (92 aa).

It belongs to the universal ribosomal protein uS19 family.

The protein localises to the plastid. The protein resides in the chloroplast. Protein S19 forms a complex with S13 that binds strongly to the 16S ribosomal RNA. This chain is Small ribosomal subunit protein uS19c, found in Acorus calamus (Sweet flag).